A 121-amino-acid polypeptide reads, in one-letter code: MARIAGVDIPRDKRVEVALTYIYGIGLTRAKTILTKSDVNPDIRVKDLEDGDVQKLRTALEAFTIEGDLRRQEGMALKRLQDIGCLRGRRHRMSLPVRGQRTRTNARTRRGARKTVAGKKK.

The interval 97–121 (VRGQRTRTNARTRRGARKTVAGKKK) is disordered. Over residues 100-121 (QRTRTNARTRRGARKTVAGKKK) the composition is skewed to basic residues.

This sequence belongs to the universal ribosomal protein uS13 family. As to quaternary structure, part of the 30S ribosomal subunit. Forms a loose heterodimer with protein S19. Forms two bridges to the 50S subunit in the 70S ribosome.

Functionally, located at the top of the head of the 30S subunit, it contacts several helices of the 16S rRNA. In the 70S ribosome it contacts the 23S rRNA (bridge B1a) and protein L5 of the 50S subunit (bridge B1b), connecting the 2 subunits; these bridges are implicated in subunit movement. Contacts the tRNAs in the A and P-sites. This chain is Small ribosomal subunit protein uS13, found in Prochlorococcus marinus (strain MIT 9313).